A 782-amino-acid chain; its full sequence is Translation initiation factor IF-2 (782 aa).

Over residues 1–14 the composition is skewed to basic and acidic residues; sequence MSKNIDDKNEDGKK. 2 disordered regions span residues 1–106 and 132–174; these read MSKN…KKTY and SIVS…AETE. Over residues 15-25 the composition is skewed to basic residues; sequence IKIIKLRKKVV. A compositionally biased stretch (polar residues) spans 31–43; sequence NDLSGKNNPSGST. Over residues 44–61 the composition is skewed to basic and acidic residues; that stretch reads DLHKHNNKVEYSHSRDGR. 2 stretches are compositionally biased toward polar residues: residues 86 to 106 and 133 to 142; these read GYSQ…KKTY and IVSSASSTDS. Residues 143-159 show a composition bias toward basic and acidic residues; that stretch reads ENSKELNRKLGEKKKQQ. The tr-type G domain maps to 280–453; that stretch reads EKPPVITIMG…DMMLLKANPS (174 aa). The interval 289 to 296 is G1; sequence GHVDHGKT. 289–296 contacts GTP; it reads GHVDHGKT. The interval 314–318 is G2; that stretch reads GITQH. The segment at 335–338 is G3; that stretch reads DTPG. GTP-binding positions include 335–339 and 389–392; these read DTPGH and NKID. Positions 389–392 are G4; the sequence is NKID. Positions 425 to 427 are G5; sequence SAL.

This sequence belongs to the TRAFAC class translation factor GTPase superfamily. Classic translation factor GTPase family. IF-2 subfamily.

The protein resides in the cytoplasm. Functionally, one of the essential components for the initiation of protein synthesis. Protects formylmethionyl-tRNA from spontaneous hydrolysis and promotes its binding to the 30S ribosomal subunits. Also involved in the hydrolysis of GTP during the formation of the 70S ribosomal complex. The protein is Translation initiation factor IF-2 of Borreliella afzelii (strain PKo) (Borrelia afzelii).